A 1524-amino-acid polypeptide reads, in one-letter code: DNA polymerase alpha catalytic subunit (1524 aa).

2 disordered regions span residues 1–53 (MSGD…QKPI) and 68–139 (RRRE…KVNP). Over residues 20-30 (SSRKDTLERLK) the composition is skewed to basic and acidic residues. A compositionally biased stretch (acidic residues) spans 79–96 (EDGEGGDLGYLDEGEEED). Residues cysteine 1333, cysteine 1336, cysteine 1375, cysteine 1378, cysteine 1414, cysteine 1419, cysteine 1440, and cysteine 1446 each coordinate Zn(2+). The CysA-type zinc-finger motif lies at 1333-1378 (CPSCSTAFNCPSIISSVCASISKKPATPETEESDSTFWLKLHCPKC). The CysB motif motif lies at 1414 to 1446 (CEDESCKHTTRSPNFRLLGERERGTVCPNYPNC).

This sequence belongs to the DNA polymerase type-B family.

Its subcellular location is the nucleus. It catalyses the reaction DNA(n) + a 2'-deoxyribonucleoside 5'-triphosphate = DNA(n+1) + diphosphate. Its function is as follows. Polymerase alpha in a complex with DNA primase is a replicative polymerase. In Arabidopsis thaliana (Mouse-ear cress), this protein is DNA polymerase alpha catalytic subunit (POLA).